The following is a 531-amino-acid chain: Ceramide kinase (531 aa).

The segment at 1 to 115 is essential for enzyme activity; that stretch reads MGAMGAAEPL…SADEQLCHLW (115 aa). The interval 1-125 is required for binding to sulfatide and phosphoinositides; the sequence is MGAMGAAEPL…LQTLRGLLES (125 aa). A DAGKc domain is found at 128 to 278; that stretch reads SRPKHLLVFI…IDVSSVHYHN (151 aa). ATP-binding positions include 138-140 and 170-174; these read NPF and TEHAN. A substrate-binding site is contributed by 195-198; it reads GGDG. Asp197 serves as the catalytic Proton donor/acceptor. Residues Glu202, 239–241, Arg304, and Arg310 each bind ATP; that span reads GST. Phosphoserine occurs at positions 340 and 408. Residue 502 to 504 coordinates ATP; sequence DGE.

The cofactor is Ca(2+). Mg(2+) serves as cofactor. As to expression, high level expression in heart, brain, testis and pancreas; low expression in spleen, liver and lung; not detected in skeletal muscle.

The protein localises to the cytoplasm. It is found in the cell membrane. It catalyses the reaction an N-acylsphing-4-enine + ATP = an N-acylsphing-4-enine 1-phosphate + ADP + H(+). The catalysed reaction is N-(hexanoyl)sphing-4-enine + ATP = N-hexanoylsphing-4-enine 1-phosphate + ADP + H(+). It carries out the reaction N-(acetyl)-sphing-4-enine + ATP = N-(acetyl)-sphing-4-enine-1-phosphate + ADP + H(+). The enzyme catalyses N-hexadecanoylsphing-4-enine + ATP = N-(hexadecanoyl)-sphing-4-enine-1-phosphate + ADP + H(+). It catalyses the reaction N-hexanoyl-(4R)-hydroxysphinganine + ATP = N-hexanoyl-(4R)-hydroxysphinganine-1-phosphate + ADP + H(+). Functionally, catalyzes specifically the phosphorylation of ceramide to form ceramide 1-phosphate. Acts efficiently on natural and analog ceramides (C6, C8, C16 ceramides, and C8-dihydroceramide), to a lesser extent on C2-ceramide and C6-dihydroceramide, but not on other lipids, such as various sphingosines. Shows a greater preference for D-erythro isomer of ceramides. Binds phosphoinositides. This Mus musculus (Mouse) protein is Ceramide kinase (Cerk).